The chain runs to 365 residues: Phospho-N-acetylmuramoyl-pentapeptide-transferase (365 aa).

10 consecutive transmembrane segments (helical) span residues 22–42 (YISV…LALG), 74–94 (TMGG…WGNL), 95–115 (TSIY…IGFF), 134–154 (KFAL…YLLS), 168–188 (SLYI…IING), 201–221 (GLAI…AYIE), 240–260 (LAEV…FLWF), 267–287 (VFMG…IAVM), 292–312 (LIFF…MLQV), and 342–362 (KVVI…FAAI).

Belongs to the glycosyltransferase 4 family. MraY subfamily. It depends on Mg(2+) as a cofactor.

The protein resides in the cell inner membrane. The catalysed reaction is UDP-N-acetyl-alpha-D-muramoyl-L-alanyl-gamma-D-glutamyl-meso-2,6-diaminopimeloyl-D-alanyl-D-alanine + di-trans,octa-cis-undecaprenyl phosphate = di-trans,octa-cis-undecaprenyl diphospho-N-acetyl-alpha-D-muramoyl-L-alanyl-D-glutamyl-meso-2,6-diaminopimeloyl-D-alanyl-D-alanine + UMP. The protein operates within cell wall biogenesis; peptidoglycan biosynthesis. In terms of biological role, catalyzes the initial step of the lipid cycle reactions in the biosynthesis of the cell wall peptidoglycan: transfers peptidoglycan precursor phospho-MurNAc-pentapeptide from UDP-MurNAc-pentapeptide onto the lipid carrier undecaprenyl phosphate, yielding undecaprenyl-pyrophosphoryl-MurNAc-pentapeptide, known as lipid I. This chain is Phospho-N-acetylmuramoyl-pentapeptide-transferase, found in Francisella tularensis subsp. holarctica (strain OSU18).